The primary structure comprises 316 residues: Olfactory receptor 2G6 (316 aa).

The Extracellular segment spans residues 1–25 (MEETNNSSEKGFLLLGFSDQPQLER). N-linked (GlcNAc...) asparagine glycans are attached at residues N5 and N6. A helical transmembrane segment spans residues 26–49 (FLFAIILYFYVLSLLGNTALILVC). Topologically, residues 50 to 57 (CLDSRLHT) are cytoplasmic. Residues 58–79 (PMYFFLSNLSCVDICFTTSVAP) traverse the membrane as a helical segment. The Extracellular portion of the chain corresponds to 80–100 (QLLVTMNKKDKTMSYGGCVAQ). A disulfide bridge connects residues C97 and C189. A helical membrane pass occupies residues 101–120 (LYVAMGLGSSECILLAVMAY). Residues 121 to 139 (DRYAAVCRPLRYIAIMHPR) lie on the Cytoplasmic side of the membrane. A helical membrane pass occupies residues 140 to 158 (FCASLAGGAWLSGLITSLI). Over 159–195 (QCSLTVQLPLCGHRTLDHIFCEVPVLIKLACVDTTFN) the chain is Extracellular. Residues 196–219 (EAELFVASVVFLIVPVLLILVSYG) traverse the membrane as a helical segment. Residues 220 to 236 (FITQAVLRIKSAAGRQK) lie on the Cytoplasmic side of the membrane. The helical transmembrane segment at 237–259 (AFGTCSSHLVVVIIFYGTIIFMY) threads the bilayer. Residues 260-272 (LQPANRRSKNQGK) are Extracellular-facing. Residues 273 to 292 (FVSLFYTIVTPLLNPIIYTL) traverse the membrane as a helical segment. Residues 293–316 (RNKDVKGALRTLILGSAAGQSHKD) lie on the Cytoplasmic side of the membrane.

It belongs to the G-protein coupled receptor 1 family.

The protein resides in the cell membrane. Its function is as follows. Odorant receptor. The protein is Olfactory receptor 2G6 (OR2G6) of Homo sapiens (Human).